We begin with the raw amino-acid sequence, 218 residues long: ATP phosphoribosyltransferase (218 aa).

This sequence belongs to the ATP phosphoribosyltransferase family. Short subfamily. As to quaternary structure, heteromultimer composed of HisG and HisZ subunits.

It is found in the cytoplasm. It carries out the reaction 1-(5-phospho-beta-D-ribosyl)-ATP + diphosphate = 5-phospho-alpha-D-ribose 1-diphosphate + ATP. The protein operates within amino-acid biosynthesis; L-histidine biosynthesis; L-histidine from 5-phospho-alpha-D-ribose 1-diphosphate: step 1/9. Functionally, catalyzes the condensation of ATP and 5-phosphoribose 1-diphosphate to form N'-(5'-phosphoribosyl)-ATP (PR-ATP). Has a crucial role in the pathway because the rate of histidine biosynthesis seems to be controlled primarily by regulation of HisG enzymatic activity. The sequence is that of ATP phosphoribosyltransferase from Burkholderia thailandensis (strain ATCC 700388 / DSM 13276 / CCUG 48851 / CIP 106301 / E264).